The following is an 879-amino-acid chain: Pentatricopeptide repeat-containing protein At1g71210, mitochondrial (879 aa).

Residues 1-44 constitute a mitochondrion transit peptide; sequence MLRCWSVTVERSCEGMLLRRRILSLSASSFRNFTSGNNGDAIPF. 16 PPR repeats span residues 181–215, 216–246, 250–280, 285–319, 320–355, 356–390, 391–425, 426–460, 461–495, 496–530, 531–565, 566–597, 602–636, 637–667, 671–705, and 706–740; these read SLRL…GLDL, DSFG…ISVR, CAVT…LLPN, CGSG…GTVN, MDRA…GCEL, EVFR…GVSP, NKKT…GFAP, TAMS…GHFL, GGKT…DLLP, KRIA…GVDT, SFKM…GYTP, TRSL…FQLS, KVQA…GITP, TVAS…LREQ, KKRL…GLQP, and SIEC…GRRI.

It belongs to the PPR family. P subfamily.

It localises to the mitochondrion. This Arabidopsis thaliana (Mouse-ear cress) protein is Pentatricopeptide repeat-containing protein At1g71210, mitochondrial.